Here is a 1673-residue protein sequence, read N- to C-terminus: AF4/FMR2 family member lilli (1673 aa).

9 disordered regions span residues 1–24, 54–80, 125–302, 407–534, 575–604, 722–1086, 1114–1133, 1141–1160, and 1187–1315; these read MAQQ…NNNN, YSQN…QQGI, SRSA…PPEK, QLPP…GAQN, VGTG…SNKW, RLSD…INTL, QGKL…PAAP, RMTP…PART, and KLTP…MGKE. Residues 71–80 show a composition bias toward basic and acidic residues; that stretch reads REKIERQQGI. Low complexity-rich tracts occupy residues 146 to 180 and 223 to 244; these read SLGH…QQQQ and PRTS…SGGV. Phosphothreonine is present on Thr-420. Positions 428-441 are enriched in basic and acidic residues; that stretch reads LKTEKNHSLEKQDS. Residues 443-454 are compositionally biased toward acidic residues; it reads LENDLELSESED. 2 positions are modified to phosphoserine: Ser-450 and Ser-452. Residues 465-486 show a composition bias toward low complexity; it reads GNSSNSSESDSSESGSESSSKN. Basic residues predominate over residues 491 to 500; sequence HPNHQQHHHQ. Over residues 501-525 the composition is skewed to low complexity; that stretch reads LQQQQQQQQATMQQQQVLQQQHRSQ. Positions 577-586 are enriched in gly residues; it reads TGSGSGGTLS. The segment covering 594 to 604 has biased composition (polar residues); sequence KTPSPTESNKW. The segment covering 724-757 has biased composition (low complexity); that stretch reads SDSGTSASGSSSSSSSSSDSAMGGEVVPMPGPGE. Over residues 775–788 the composition is skewed to polar residues; the sequence is QPTQSQKAPPSNSV. Residues 802-812 are compositionally biased toward basic residues; it reads QRQKKPRKKKA. A phosphoserine mark is found at Ser-821 and Ser-822. Residues 851–863 constitute a DNA-binding region (a.T hook); that stretch reads KKGRGRPRKQQQS. The segment covering 860–898 has biased composition (low complexity); it reads QQQSGGSGNLSSASAGSSSQTKGPTLTAAKKPLAKTPLA. A phosphoserine mark is found at Ser-871 and Ser-873. Residues 909–919 are compositionally biased toward polar residues; it reads SQSSSNGNTPT. Composition is skewed to low complexity over residues 949–965 and 993–1004; these read SSSA…SSSS and GSGSSSPSSSGS. Residues 1011 to 1022 show a composition bias toward polar residues; it reads TRSQVGSGQALA. The segment covering 1034–1060 has biased composition (low complexity); it reads SQHSQHLSSSDCSSSSGGCTAVCSSSS. Over residues 1065-1082 the composition is skewed to basic and acidic residues; the sequence is EGRREKERERKPKSDKNK. The span at 1190–1205 shows a compositional bias: polar residues; it reads PAQQNGHLTPKDQATN. 2 stretches are compositionally biased toward basic and acidic residues: residues 1226 to 1243 and 1252 to 1282; these read EHPV…EAKF and FQLK…EQPP. Position 1362 is a phosphoserine (Ser-1362). Phosphothreonine is present on Thr-1364. The segment covering 1564 to 1583 has biased composition (low complexity); it reads NTPSSISPSNSVGSQGSGSN. Residues 1564-1588 are disordered; sequence NTPSSISPSNSVGSQGSGSNTPPGR.

It belongs to the AF4 family. In terms of assembly, component of the super elongation complex (SEC), at least composed of Ell, Cdk9, cyclin-T (CycT), lilli and ear.

Its subcellular location is the nucleus. In terms of biological role, has a role in transcriptional regulation. Acts in parallel with the Ras/MAPK and the PI3K/PKB pathways in the control of cell identity and cellular growth. Essential for regulation of the cytoskeleton and cell growth but not for cell proliferation or growth rate. Required specifically for the microtubule-based basal transport of lipid droplets. Plays a partially redundant function downstream of Raf in cell fate specification in the developing eye. Pair-rule protein that regulates embryonic cellularization, gastrulation and segmentation. In Drosophila melanogaster (Fruit fly), this protein is AF4/FMR2 family member lilli.